A 157-amino-acid polypeptide reads, in one-letter code: Endoribonuclease YbeY (157 aa).

The Zn(2+) site is built by H116, H120, and H126.

The protein belongs to the endoribonuclease YbeY family. Zn(2+) is required as a cofactor.

It is found in the cytoplasm. Its function is as follows. Single strand-specific metallo-endoribonuclease involved in late-stage 70S ribosome quality control and in maturation of the 3' terminus of the 16S rRNA. The polypeptide is Endoribonuclease YbeY (Pseudarthrobacter chlorophenolicus (strain ATCC 700700 / DSM 12829 / CIP 107037 / JCM 12360 / KCTC 9906 / NCIMB 13794 / A6) (Arthrobacter chlorophenolicus)).